Consider the following 37-residue polypeptide: MKVRASVKKLCRNCKVVKREGVVRVICSDPKHKQRQG.

The protein belongs to the bacterial ribosomal protein bL36 family.

The protein is Large ribosomal subunit protein bL36A of Actinobacillus pleuropneumoniae serotype 3 (strain JL03).